We begin with the raw amino-acid sequence, 346 residues long: Outer membrane protein A (346 aa).

The signal sequence occupies residues 1–21; that stretch reads MKKTAIAIAVALAGFATVAQA. 8 beta stranded membrane passes run 27–37, 55–66, 70–78, 96–107, 112–120, 142–151, 156–163, and 182–190; these read TWYTGAKLGWS, QLGAGAFGGYQV, VGFEMGYDW, QGVQLTAKLGYP, LDIYTRLGG, PVFAGGVEYA, IATRLEYQ, and MLSLGVSYR. The interval 197 to 208 is hinge-like; it reads APVVAPAPAPAP. 4 tandem repeats follow at residues 201 to 202, 203 to 204, 205 to 206, and 207 to 208. The tract at residues 201–208 is 4 X 2 AA tandem repeats of A-P; the sequence is APAPAPAP. The OmpA-like domain occupies 210-338; that stretch reads VQTKHFTLKS…RVEIEVKGIK (129 aa). An intrachain disulfide couples C311 to C323.

The protein belongs to the outer membrane OOP (TC 1.B.6) superfamily. OmpA family. Monomer and homodimer.

It localises to the cell outer membrane. In terms of biological role, with TolR probably plays a role in maintaining the position of the peptidoglycan cell wall in the periplasm. Acts as a porin with low permeability that allows slow penetration of small solutes; an internal gate slows down solute passage. Functionally, required for conjugation with F-type plasmids; probably serves as the mating receptor on recipient cells. This chain is Outer membrane protein A, found in Escherichia coli O157:H7.